We begin with the raw amino-acid sequence, 386 residues long: Galactokinase (386 aa).

35–38 (EHTD) is a binding site for substrate. Residue 125–131 (GAGLSSS) participates in ATP binding. Positions 131 and 163 each coordinate Mg(2+). Residue D175 is the Proton acceptor of the active site. Y224 contributes to the substrate binding site.

Belongs to the GHMP kinase family. GalK subfamily.

The protein resides in the cytoplasm. It catalyses the reaction alpha-D-galactose + ATP = alpha-D-galactose 1-phosphate + ADP + H(+). It functions in the pathway carbohydrate metabolism; galactose metabolism. Functionally, catalyzes the transfer of the gamma-phosphate of ATP to D-galactose to form alpha-D-galactose-1-phosphate (Gal-1-P). This Vibrio cholerae serotype O1 (strain ATCC 39315 / El Tor Inaba N16961) protein is Galactokinase.